The chain runs to 298 residues: Olfactory receptor 52Z1P (298 aa).

At 1-14 (MGIPGLEGLHTWIS) the chain is on the extracellular side. A helical membrane pass occupies residues 15-35 (IPFSFMYIVAVAGNIFLIFLI). Over 36–43 (MTERSLHE) the chain is Cytoplasmic. Residues 44–64 (PMYLFLSMLASADFLLATAAA) traverse the membrane as a helical segment. At 65 to 85 (PKVLAILWFHSMDISFGSCVS) the chain is on the extracellular side. A disulfide bridge links cysteine 83 with cysteine 164. A helical transmembrane segment spans residues 86–106 (QMFFIHFIFVAESAILLAMAF). At 107-128 (DRYVAICYPLRYTILTSSAVRK) the chain is on the cytoplasmic side. The helical transmembrane segment at 129–149 (IGIAAVVRSFFICCPFIFLVY) threads the bilayer. The Extracellular segment spans residues 150–178 (RLTYCGRNIIPHSYCEHIARLACGNINVN). A helical transmembrane segment spans residues 179 to 199 (IIYGLTVALLSTGLDIVLIII). The Cytoplasmic segment spans residues 200-223 (SYTMILHSVFQISSWAARFKALST). Residues 224–244 (CGSHICVIFMFYTPAFFSFLA) form a helical membrane-spanning segment. The Extracellular portion of the chain corresponds to 245–257 (HRFGGKTIPHHIH). A helical transmembrane segment spans residues 258 to 278 (ILVGSLYVLVPPMLNPIIYGV). The Cytoplasmic portion of the chain corresponds to 279-298 (KTKQIKDRVILLFSPISVCC).

Belongs to the G-protein coupled receptor 1 family.

It is found in the cell membrane. Functionally, odorant receptor. This chain is Olfactory receptor 52Z1P, found in Homo sapiens (Human).